The following is a 249-amino-acid chain: Ubiquinone/menaquinone biosynthesis C-methyltransferase UbiE (249 aa).

Residues threonine 72, aspartate 93, and 121 to 122 (NA) contribute to the S-adenosyl-L-methionine site.

It belongs to the class I-like SAM-binding methyltransferase superfamily. MenG/UbiE family.

It carries out the reaction a 2-demethylmenaquinol + S-adenosyl-L-methionine = a menaquinol + S-adenosyl-L-homocysteine + H(+). The enzyme catalyses a 2-methoxy-6-(all-trans-polyprenyl)benzene-1,4-diol + S-adenosyl-L-methionine = a 5-methoxy-2-methyl-3-(all-trans-polyprenyl)benzene-1,4-diol + S-adenosyl-L-homocysteine + H(+). Its pathway is quinol/quinone metabolism; menaquinone biosynthesis; menaquinol from 1,4-dihydroxy-2-naphthoate: step 2/2. It participates in cofactor biosynthesis; ubiquinone biosynthesis. In terms of biological role, methyltransferase required for the conversion of demethylmenaquinol (DMKH2) to menaquinol (MKH2) and the conversion of 2-polyprenyl-6-methoxy-1,4-benzoquinol (DDMQH2) to 2-polyprenyl-3-methyl-6-methoxy-1,4-benzoquinol (DMQH2). The sequence is that of Ubiquinone/menaquinone biosynthesis C-methyltransferase UbiE from Hahella chejuensis (strain KCTC 2396).